The following is a 589-amino-acid chain: Protein kinase G11A (589 aa).

The tract at residues 1-167 is disordered; that stretch reads MASKAMPRAP…SACSSISSVT (167 aa). Polar residues-rich tracts occupy residues 15-36, 46-55, and 63-76; these read NLQS…SPSK, AESSKPNSEV, and TQHQ…TGSN. The span at 91-100 shows a compositional bias: basic and acidic residues; that stretch reads RLADEEKGVV. Residues 142–165 are compositionally biased toward low complexity; it reads SSSRCRPSTSSDVSDESACSSISS. The region spanning 195 to 533 is the Protein kinase domain; sequence FKLLKKLGCG…ATEIKQHPFF (339 aa). ATP is bound by residues 201-209 and Lys224; that span reads LGCGDIGSV. Asp320 serves as the catalytic Proton acceptor. The interval 551–589 is disordered; it reads RPVEIERPPKQPVSTSEPAAAPSDAAQKSSDSYLEFDFF.

This sequence belongs to the protein kinase superfamily. Ser/Thr protein kinase family.

The enzyme catalyses L-seryl-[protein] + ATP = O-phospho-L-seryl-[protein] + ADP + H(+). It carries out the reaction L-threonyl-[protein] + ATP = O-phospho-L-threonyl-[protein] + ADP + H(+). May play a role in the regulation of metabolism and signal transduction processes. This is Protein kinase G11A from Oryza sativa subsp. indica (Rice).